The primary structure comprises 232 residues: Izumo sperm-egg fusion protein 4 (232 aa).

Positions 1-15 (MALLLCLVCLTAALA) are cleaved as a signal peptide. N24 and N219 each carry an N-linked (GlcNAc...) asparagine glycan.

Belongs to the Izumo family. As to expression, detected in sperm.

It is found in the secreted. This Homo sapiens (Human) protein is Izumo sperm-egg fusion protein 4 (IZUMO4).